The sequence spans 422 residues: Probable metallocarboxypeptidase A (422 aa).

The N-terminal stretch at 1–17 (MRSVLSLALLAVNVVTA) is a signal peptide. A propeptide spans 18–112 (AVVAPFDYSG…FEAYSAGYAP (95 aa)) (activation peptide). The region spanning 119 to 419 (SYHSYQDHLS…AGTVAMLKAV (301 aa)) is the Peptidase M14 domain. Zn(2+)-binding residues include H179 and E182. Residues 179–182 (HARE), R237, and 254–255 (NR) each bind substrate. An intrachain disulfide couples C248 to C271. H309 contacts Zn(2+). A substrate-binding site is contributed by 310–311 (SY). The active-site Proton donor/acceptor is the E385.

It belongs to the peptidase M14 family. Zn(2+) serves as cofactor.

The protein localises to the secreted. Extracellular metalloprotease that contributes to pathogenicity. This is Probable metallocarboxypeptidase A (MCPA) from Trichophyton verrucosum (strain HKI 0517).